Here is a 54-residue protein sequence, read N- to C-terminus: ITTVDCSDYPKPVCSLEYMPLCGSDNKTYGNKCNFCNAVADSNGTLTLSHFGKC.

The 51-residue stretch at 4–54 folds into the Kazal-like domain; sequence VDCSDYPKPVCSLEYMPLCGSDNKTYGNKCNFCNAVADSNGTLTLSHFGKC. Intrachain disulfides connect Cys6–Cys36, Cys14–Cys33, and Cys22–Cys54. A glycan (N-linked (GlcNAc...) asparagine) is linked at Asn43.

It is found in the secreted. In Guira guira (Guira cuckoo), this protein is Ovomucoid.